Here is an 813-residue protein sequence, read N- to C-terminus: LPS-assembly protein LptD (813 aa).

The N-terminal stretch at 1 to 22 is a signal peptide; the sequence is MRRALRLLPLPLSIAICLPAMA.

Belongs to the LptD family. As to quaternary structure, component of the lipopolysaccharide transport and assembly complex. Interacts with LptE and LptA.

The protein resides in the cell outer membrane. In terms of biological role, together with LptE, is involved in the assembly of lipopolysaccharide (LPS) at the surface of the outer membrane. This Xanthomonas oryzae pv. oryzae (strain MAFF 311018) protein is LPS-assembly protein LptD.